The chain runs to 261 residues: Pyridoxine-5'-phosphate oxidase (261 aa).

42–45 (RGDR) lines the pyridoxal 5'-phosphate pocket. 95–98 (RMLL) contacts FMN. K100 contacts pyridoxal 5'-phosphate. Residues 110–111 (FT), 116–117 (RK), and Q139 each bind FMN. Residues Y157, R161, and S165 each contribute to the pyridoxal 5'-phosphate site. Residues 174-175 (QS) and W219 contribute to the FMN site. 225 to 227 (RLH) provides a ligand contact to pyridoxal 5'-phosphate. An FMN-binding site is contributed by R229. T238 carries the post-translational modification Phosphothreonine. At S241 the chain carries Phosphoserine.

Belongs to the pyridoxamine 5'-phosphate oxidase family. As to quaternary structure, homodimer. FMN serves as cofactor. Ubiquitous. Expressed in liver, brain, lung, prostate and stomach (at protein level).

The catalysed reaction is pyridoxine 5'-phosphate + O2 = pyridoxal 5'-phosphate + H2O2. It carries out the reaction pyridoxamine 5'-phosphate + O2 + H2O = pyridoxal 5'-phosphate + H2O2 + NH4(+). Its pathway is cofactor metabolism; pyridoxal 5'-phosphate salvage; pyridoxal 5'-phosphate from pyridoxamine 5'-phosphate: step 1/1. It functions in the pathway cofactor metabolism; pyridoxal 5'-phosphate salvage; pyridoxal 5'-phosphate from pyridoxine 5'-phosphate: step 1/1. Functionally, catalyzes the oxidation of either pyridoxine 5'-phosphate (PNP) or pyridoxamine 5'-phosphate (PMP) into pyridoxal 5'-phosphate (PLP). This chain is Pyridoxine-5'-phosphate oxidase (PNPO), found in Homo sapiens (Human).